A 318-amino-acid chain; its full sequence is NADH-ubiquinone oxidoreductase chain 1 (318 aa).

A run of 8 helical transmembrane segments spans residues 2–22, 68–88, 100–120, 146–166, 171–191, 213–233, 253–273, and 285–305; these read PMTNLLLLIVPILIAMAFLML, ITLYITAPTLALTIALLLWTP, LGLLFILATSSLAVYSILWSG, LAIILLSTLLMSGSFNLSTLV, HLWLILPTWPLAMMWFISTLA, IEYAAGPFALFFMAEYMNIIM, ELYTTYFVTKALLLTSLFLWI, and LMHLLWKNFLPLTLASLMWYI.

The protein belongs to the complex I subunit 1 family. In terms of assembly, core subunit of respiratory chain NADH dehydrogenase (Complex I) which is composed of 45 different subunits.

It is found in the mitochondrion inner membrane. The enzyme catalyses a ubiquinone + NADH + 5 H(+)(in) = a ubiquinol + NAD(+) + 4 H(+)(out). Functionally, core subunit of the mitochondrial membrane respiratory chain NADH dehydrogenase (Complex I) which catalyzes electron transfer from NADH through the respiratory chain, using ubiquinone as an electron acceptor. Essential for the catalytic activity and assembly of complex I. The chain is NADH-ubiquinone oxidoreductase chain 1 (MT-ND1) from Pan troglodytes (Chimpanzee).